Consider the following 354-residue polypeptide: MPQKVRIALDAMGGDIGASVVIPGAVISLNRHPDTEFLLYGDRTLIEAQLAAHPAMKAVSRVVHTDVAVAMHDKPSQALRRGRKTSSMWLAIDAVKKGEADVAVSAGNTGALMAMARFNLRTLPGIDRPAIAGVWPTMRGDSVVLDLGATIGGDAHHLMALAIMGSAMARVLFGLERPTVGLLNIGVEEIKGGEEIREAAELLRAMDLPQLEFIGFVEGDGIGKGAADVIVSEGFSGNIALKAAEGTARQFAQYLRGAMSRTLLSRIGYLFARGAFKALRDKMDPRKSNGGVFLGLNGIVVKSHGGTDAEGFAYAVDVGYEMVRYDLLTKINQTLNRHGHTTLASASAVQEALS.

Belongs to the PlsX family. In terms of assembly, homodimer. Probably interacts with PlsY.

It localises to the cytoplasm. It catalyses the reaction a fatty acyl-[ACP] + phosphate = an acyl phosphate + holo-[ACP]. It functions in the pathway lipid metabolism; phospholipid metabolism. Its function is as follows. Catalyzes the reversible formation of acyl-phosphate (acyl-PO(4)) from acyl-[acyl-carrier-protein] (acyl-ACP). This enzyme utilizes acyl-ACP as fatty acyl donor, but not acyl-CoA. This Nitrobacter hamburgensis (strain DSM 10229 / NCIMB 13809 / X14) protein is Phosphate acyltransferase.